The following is a 985-amino-acid chain: MDAPPPTKPPRGVKYGKDESAGCGFLVNVIKSLGFSETTEERQKEKQKIEAEFKRSDLRLNELVSRHDQQLTQVLPLFSQVSSEVTASRERIHAVKENLGVCKRLLQCRRDELRKMWMDAVQHKYVLEMLEQIQELRKVPQRVVGYTAKRQYLHASKALTDALTTLNGPLQAVEGLSDLRTDLQTRRQQLYQRLHEELVTQVYTNSANEALSSFQRTNSSRLNSSFTRGIGARRSTDRIEANARVRKALAEMAQSFDLDKAEVIEDADLIYPELSMSYFVAIIVESFGMLHKVPDSLETLRVQIQTELLNVVRHTTHQLSVSGATADTNPLLSLLEVIFKQFKAIAKTHSLLLKNYLSVGQKYSVVGPQPYDLTDFWAQAQSVLQLLLTDYLDIQNAAADESAQTGFSEPTSNINSYFLRRKVPSTKRSMFKFDKSSHVGTSNNSDAFKEHRRNASDASVDDNLAGQLGGSGKGSTSGLFPHEKKQREKILICTPDQSIITKVYLPLMGYIKEIENFMKCKPGQPCSLHDFLDNYIKDTFLTKGHNRNLQLTIESLSKNQDAWRTIISPEEIKALNLSRPLLQSTVMVERRLMETKNLIQDLPCYSEDLLKMVCALLKAYREICQAAYRGIVQPDSEDKRIYSVAWLKDEDISRFLKTLPNWTDLKTYSQKSRHNRKLHRGSFEPSEEESPLQVQQRNIREAEMLTSNLGEGGITQQEILVEISVLKELAILQESMEWFSCRVSEFANDLRRPLVNGLNAVPAECGADIAVKDGTIKVMTNLALEFDELANTCLLVLHLEVRVQCFHYLRSKSSVRTNSYVGSKDDILEPDRQVQVLTKRLSEMDEAFSATLHPRKTRYIFEGLAHLASRILIQASNYLEHIDQITVQRMCRNAIALQQTLSNITASREVALDQARHFYELLCMEPDEILNALLERGTQFSEMQLLNALQLSCKSFGITDANLLASYQQKLSDILGAKPSKGVVV.

Residues 36 to 70 (SETTEERQKEKQKIEAEFKRSDLRLNELVSRHDQQ) adopt a coiled-coil conformation. Phosphoserine occurs at positions 235, 456, 459, 682, and 686. The tract at residues 434–480 (DKSSHVGTSNNSDAFKEHRRNASDASVDDNLAGQLGGSGKGSTSGLF) is disordered.

It belongs to the SEC8 family. The exocyst complex is composed of Sec3/Exoc1, Sec5/Exoc2, Sec6/Exoc3, Sec8/Exoc4, Sec10/Exoc5, Sec15/Exoc6, exo70/Exoc7 and Exo84/Exoc8. In terms of tissue distribution, abundant in the embryonic and larval glutamatergic neuromuscular junctions (NMJs), pre and postsynaptically.

In terms of biological role, component of the exocyst complex involved in the docking of exocytic vesicles with fusion sites on the plasma membrane. Involved in regulation of synaptic microtubule formation, and also regulation of synaptic growth and glutamate receptor trafficking. Does not appear to be required for basal neurotransmission. The polypeptide is Exocyst complex component 4 (Drosophila melanogaster (Fruit fly)).